Consider the following 202-residue polypeptide: FMN-dependent NADH:quinone oxidoreductase (202 aa).

Residues Ser-9, 15–17, 95–98, and 139–142 each bind FMN; these read SVS, MYNF, and SRGG.

Belongs to the azoreductase type 1 family. As to quaternary structure, homodimer. FMN is required as a cofactor.

It catalyses the reaction 2 a quinone + NADH + H(+) = 2 a 1,4-benzosemiquinone + NAD(+). The catalysed reaction is N,N-dimethyl-1,4-phenylenediamine + anthranilate + 2 NAD(+) = 2-(4-dimethylaminophenyl)diazenylbenzoate + 2 NADH + 2 H(+). Functionally, quinone reductase that provides resistance to thiol-specific stress caused by electrophilic quinones. Also exhibits azoreductase activity. Catalyzes the reductive cleavage of the azo bond in aromatic azo compounds to the corresponding amines. The protein is FMN-dependent NADH:quinone oxidoreductase of Laribacter hongkongensis (strain HLHK9).